A 272-amino-acid polypeptide reads, in one-letter code: MSQQRTARRQPSLLVDPAQETVRRRCRDPINVENLLPSKIRINLEENVQYVSMRKALKVKRPRFDVSLVYLTRKFMDLVRSAPGGILDLNKVATKLGVRKRRVYDITNVLDGIELVEKKSKNHIRWIGSDLNNFGAAPQQKKLQAELSDLSAMEDALDELIKDCAQQLLELTDDKENERLAYVTYQDIHGIQAFHEQIVIAVKAPEETRLDVPAPREDSITVHIRSTKGPIDVYLCEVEQNHSNGKTNDGIGASPSKSSHPQCPEKEDEPPQ.

The segment at 1–62 (MSQQRTARRQ…MRKALKVKRP (62 aa)) is binding to corepressors. A DNA-binding region spans residues 50-129 (YVSMRKALKV…SKNHIRWIGS (80 aa)). Residues 95–129 (KLGVRKRRVYDITNVLDGIELVEKKSKNHIRWIGS) carry the DEF box motif. The interval 130–222 (DLNNFGAAPQ…PAPREDSITV (93 aa)) is dimerization. Residues 143–164 (LQAELSDLSAMEDALDELIKDC) form a leucine-zipper region. The segment at 173–272 (DDKENERLAY…CPEKEDEPPQ (100 aa)) is transcription repression. The tract at residues 242-272 (HSNGKTNDGIGASPSKSSHPQCPEKEDEPPQ) is disordered.

It belongs to the E2F/DP family. As to quaternary structure, forms heterodimers with DP family members TFDP1 or TFDP2. Component of the DRTF1/E2F transcription factor complex. Part of the E2F6.com-1 complex in G0 phase composed of E2F6, MGA, MAX, TFDP1, CBX3, BAT8, EUHMTASE1, RING1, RNF2, MBLR, L3MBTL2 and YAF2. Component of some MLL1/MLL complex, at least composed of the core components KMT2A/MLL1, ASH2L, HCFC1/HCF1, WDR5 and RBBP5, as well as the facultative components BACC1, CHD8, E2F6, HSP70, INO80C, KANSL1, LAS1L, MAX, MCRS1, MGA, KAT8/MOF, PELP1, PHF20, PRP31, RING2, RUVB1/TIP49A, RUVB2/TIP49B, SENP3, TAF1, TAF4, TAF6, TAF7, TAF9 and TEX10.

The protein resides in the nucleus. In terms of biological role, inhibitor of E2F-dependent transcription. Binds DNA cooperatively with DP proteins through the E2 recognition site, 5'-TTTC[CG]CGC-3'. Has a preference for the 5'-TTTCCCGC-3' E2F recognition site. E2F6 lacks the transcriptional activation and pocket protein binding domains. Appears to regulate a subset of E2F-dependent genes whose products are required for entry into the cell cycle but not for normal cell cycle progression. Represses expression of some meiosis-specific genes, including SLC25A31/ANT4. May silence expression via the recruitment of a chromatin remodeling complex containing histone H3-K9 methyltransferase activity. Overexpression delays the exit of cells from the S-phase. The chain is Transcription factor E2F6 from Mus musculus (Mouse).